A 127-amino-acid chain; its full sequence is Promotilin (127 aa).

The first 25 residues, 1 to 25 (MLSRKAVAALLLVHVTAMLASQTEG), serve as a signal peptide directing secretion. The segment at 41–67 (REQNKRLRKSLRVQQRSKAAGRLEPQE) is disordered.

Belongs to the motilin family. Present in the gut mucosa with the exception of the gastric corpus. Also present in medulla oblongata, nucleus of the solitary tract, hypophysis, spinal cord, hypothalamus, and cerebellum but not in the cerebral cortex.

Its subcellular location is the secreted. Its function is as follows. Plays an important role in the regulation of interdigestive gastrointestinal motility and indirectly causes rhythmic contraction of duodenal and colonic smooth muscle. This is Promotilin (MLN) from Cavia porcellus (Guinea pig).